The following is a 467-amino-acid chain: ATP-dependent rRNA helicase rrp3 (467 aa).

The disordered stretch occupies residues 1–48; that stretch reads MPGVKKRKVAREAPAPAPAQESDVESSTPEQTQEPEAQEQEQEEGQSK. The short motif at 48–76 is the Q motif element; the sequence is KTFKELGIIEQLCEACETMGYKAPTPIQR. The Helicase ATP-binding domain maps to 79 to 250; it reads IPLALKGRDL…RASLSNPLRV (172 aa). Position 92–99 (92–99) interacts with ATP; sequence AETGSGKT. A DEAD box motif is present at residues 198-201; sequence DEAD. One can recognise a Helicase C-terminal domain in the interval 262–422; it reads TLLQSYLFIP…EYDCPKDEVM (161 aa). The tract at residues 439 to 467 is disordered; the sequence is MKDYNEKKGSRGKKFGGKRSRDEMDQEEG.

This sequence belongs to the DEAD box helicase family. DDX47/RRP3 subfamily. Interacts with the SSU processome.

The protein localises to the nucleus. The enzyme catalyses ATP + H2O = ADP + phosphate + H(+). Its function is as follows. ATP-dependent rRNA helicase required for pre-ribosomal RNA processing. Involved in the maturation of the 35S-pre-rRNA and to its cleavage to mature 18S rRNA. This chain is ATP-dependent rRNA helicase rrp3, found in Aspergillus niger (strain ATCC MYA-4892 / CBS 513.88 / FGSC A1513).